The primary structure comprises 328 residues: Telomere-binding protein cav (328 aa).

Residues 107-320 (RRKMVQPYPE…NISLQNSGSE (214 aa)) are required for binding to Su(var)205. The tract at residues 139–228 (DRWQKQKSQN…EFQTEHTDCP (90 aa)) is disordered. 2 stretches are compositionally biased toward polar residues: residues 144–167 (QKSQ…QQDS) and 180–189 (ANTNRYSVSQ). 2 short sequence motifs (su(var)205-binding Pro-containing repeat) span residues 228-232 (PETQM) and 281-287 (PETETNE). Residues 295 to 319 (INSESMSIGPSIDSEGNISLQNSGS) show a composition bias toward polar residues. Residues 295–328 (INSESMSIGPSIDSEGNISLQNSGSEPIDVDSMA) are disordered.

In terms of assembly, interacts (via C-terminus) with Su(var)205 dimer (via hinge and chromoshadow domain) and with moi to form the terminin, telomere-capping, complex. Interacts with HP6, which is also part of the terminin complex.

It is found in the nucleus. Its subcellular location is the chromosome. The protein resides in the telomere. Its function is as follows. Binds to chromosome ends in a sequence-dependent manner and is required for telomere capping. This is Telomere-binding protein cav from Drosophila erecta (Fruit fly).